Here is a 594-residue protein sequence, read N- to C-terminus: Potassium-transporting ATPase potassium-binding subunit (594 aa).

Transmembrane regions (helical) follow at residues 3–23 (ADFL…APLL), 67–87 (AVAM…LQRL), 136–156 (ALTV…IALV), 179–199 (LYVL…QGVV), 287–307 (LEML…GEMV), 314–334 (VAIL…AAYF), 415–435 (GLYG…LMIG), 453–473 (VALV…VAVL), 519–539 (VLLG…ILAL), and 562–582 (LFVA…YVPA).

Belongs to the KdpA family. In terms of assembly, the system is composed of three essential subunits: KdpA, KdpB and KdpC.

It is found in the cell inner membrane. Functionally, part of the high-affinity ATP-driven potassium transport (or Kdp) system, which catalyzes the hydrolysis of ATP coupled with the electrogenic transport of potassium into the cytoplasm. This subunit binds the periplasmic potassium ions and delivers the ions to the membrane domain of KdpB through an intramembrane tunnel. The polypeptide is Potassium-transporting ATPase potassium-binding subunit (Bordetella bronchiseptica (strain ATCC BAA-588 / NCTC 13252 / RB50) (Alcaligenes bronchisepticus)).